The primary structure comprises 93 residues: uncharacterized protein (93 aa).

The next 2 helical transmembrane spans lie at 7 to 27 and 70 to 90; these read LIFLGIILMFIGFFMITLGMI and ILSVLIAILMIIWMFLFAFGI.

Its subcellular location is the cell membrane. This is an uncharacterized protein from Methanocaldococcus jannaschii (strain ATCC 43067 / DSM 2661 / JAL-1 / JCM 10045 / NBRC 100440) (Methanococcus jannaschii).